The following is a 370-amino-acid chain: MTVFTPLVLVCAGGTGGHLFPAQSLAYALKARGIRVALATDARVDSIAGDFPAEEIVTIASATPSGRSMLRRAGAVLTLGRGFGQAARAVRRLNPAAVVGFGGYPTVPPMLAAQLLRVPTILHEQNAVMGRANGFLAKGAQVIATGFKEVRGVPEKATARRIHTGNPIRPSVLAVAETPYPALDEGSPLRLLVFGGSQGARVMSEIVPAAIEKLPQDLRARLHLVQQARPEDLTATQNRYLAMGLGGIEAAPFFKDLPGRMAAAHLVVARSGASTVSELAAIGRPAILVPLPGALDQDQAANAATLAQIGAALSIPQSAFTPDRLAAELVDLFEAPRKLTQAAAAAKTARILDAADRLATLVAETAAATS.

UDP-N-acetyl-alpha-D-glucosamine is bound by residues 15–17 (TGG), N126, R169, S197, and Q299.

Belongs to the glycosyltransferase 28 family. MurG subfamily.

It is found in the cell inner membrane. The enzyme catalyses di-trans,octa-cis-undecaprenyl diphospho-N-acetyl-alpha-D-muramoyl-L-alanyl-D-glutamyl-meso-2,6-diaminopimeloyl-D-alanyl-D-alanine + UDP-N-acetyl-alpha-D-glucosamine = di-trans,octa-cis-undecaprenyl diphospho-[N-acetyl-alpha-D-glucosaminyl-(1-&gt;4)]-N-acetyl-alpha-D-muramoyl-L-alanyl-D-glutamyl-meso-2,6-diaminopimeloyl-D-alanyl-D-alanine + UDP + H(+). Its pathway is cell wall biogenesis; peptidoglycan biosynthesis. Its function is as follows. Cell wall formation. Catalyzes the transfer of a GlcNAc subunit on undecaprenyl-pyrophosphoryl-MurNAc-pentapeptide (lipid intermediate I) to form undecaprenyl-pyrophosphoryl-MurNAc-(pentapeptide)GlcNAc (lipid intermediate II). The chain is UDP-N-acetylglucosamine--N-acetylmuramyl-(pentapeptide) pyrophosphoryl-undecaprenol N-acetylglucosamine transferase from Methylorubrum populi (strain ATCC BAA-705 / NCIMB 13946 / BJ001) (Methylobacterium populi).